Here is a 375-residue protein sequence, read N- to C-terminus: Ribosomal RNA large subunit methyltransferase F (375 aa).

Disordered stretches follow at residues 1–39 (MKNN…AAVK) and 262–281 (NQRK…GKPT). Positions 27-38 (AKPKRVKKKAAV) are enriched in basic residues.

It belongs to the methyltransferase superfamily. METTL16/RlmF family.

The protein localises to the cytoplasm. The catalysed reaction is adenosine(1618) in 23S rRNA + S-adenosyl-L-methionine = N(6)-methyladenosine(1618) in 23S rRNA + S-adenosyl-L-homocysteine + H(+). Specifically methylates the adenine in position 1618 of 23S rRNA. In Vibrio parahaemolyticus serotype O3:K6 (strain RIMD 2210633), this protein is Ribosomal RNA large subunit methyltransferase F.